Here is a 59-residue protein sequence, read N- to C-terminus: Potassium channel toxin alpha-KTx 16.2 (59 aa).

A signal peptide spans 1–22; it reads MKIFSILLVALIICSISICTEA. 3 disulfides stabilise this stretch: C30–C51, C36–C56, and C40–C58.

Belongs to the short scorpion toxin superfamily. Potassium channel inhibitor family. Alpha-KTx 16 subfamily. As to expression, expressed by the venom gland.

The protein localises to the secreted. Functionally, alpha-KTx 16.2: inhibits large conductance calcium-activated potassium channels (KCa1.1/Slo-beta4 KCNMA1/KCNMB4). It appears to block channel activity by a simple bimolecular inhibition process. Shows a fast association rate and a slow dissociation rate of binding on rat brain synaptosome. Significantly inhibits voltage-dependent sodium current and voltage-dependent delayed rectifier potassium currents. Significantly inhibits voltage-dependent sodium current (Nav) and voltage-dependent delayed rectifier potassium current. The sequence is that of Potassium channel toxin alpha-KTx 16.2 from Olivierus martensii (Manchurian scorpion).